A 346-amino-acid polypeptide reads, in one-letter code: Very-long-chain 3-oxoacyl-CoA reductase (346 aa).

The chain crosses the membrane as a helical span at residues 23–43; sequence AAWIVFGLGISKMVFLTLNFS. NADP(+) is bound by residues Val-69, Asp-123, Asn-150, Tyr-222, Lys-226, Val-255, and Ser-257. The active-site Proton donor is the Tyr-222. The active-site Lowers pKa of active site Tyr is Lys-226.

This sequence belongs to the short-chain dehydrogenases/reductases (SDR) family.

Its subcellular location is the endoplasmic reticulum membrane. The catalysed reaction is a very-long-chain (3R)-3-hydroxyacyl-CoA + NADP(+) = a very-long-chain 3-oxoacyl-CoA + NADPH + H(+). The protein operates within lipid metabolism; fatty acid biosynthesis. In terms of biological role, component of the microsomal membrane bound fatty acid elongation system, which produces the 26-carbon very long-chain fatty acids (VLCFA) from palmitate. Catalyzes the reduction of the 3-ketoacyl-CoA intermediate that is formed in each cycle of fatty acid elongation. VLCFAs serve as precursors for ceramide and sphingolipids. This is Very-long-chain 3-oxoacyl-CoA reductase from Kluyveromyces lactis (strain ATCC 8585 / CBS 2359 / DSM 70799 / NBRC 1267 / NRRL Y-1140 / WM37) (Yeast).